Reading from the N-terminus, the 648-residue chain is Biosynthetic arginine decarboxylase (648 aa).

Residue K109 is modified to N6-(pyridoxal phosphate)lysine. Substrate is bound at residue 291 to 301 (LDVGGGLGVDY).

It belongs to the Orn/Lys/Arg decarboxylase class-II family. SpeA subfamily. The cofactor is Mg(2+). Pyridoxal 5'-phosphate serves as cofactor.

It carries out the reaction L-arginine + H(+) = agmatine + CO2. It participates in amine and polyamine biosynthesis; agmatine biosynthesis; agmatine from L-arginine: step 1/1. Catalyzes the biosynthesis of agmatine from arginine. In Prochlorococcus marinus (strain MIT 9303), this protein is Biosynthetic arginine decarboxylase.